A 350-amino-acid polypeptide reads, in one-letter code: NADH-cytochrome b5 reductase 2 (350 aa).

The helical transmembrane segment at 43-63 (PLVLALGGVAGIGAWYGLGGF) threads the bilayer. In terms of domain architecture, FAD-binding FR-type spans 96–204 (DQFVEFTLKE…KGPIAKFAYK (109 aa)). 207 to 242 (EFESIGMIAGGSGITPMYQVIQDIASNPSDKTKVTL) lines the FAD pocket.

The protein belongs to the flavoprotein pyridine nucleotide cytochrome reductase family. Requires FAD as cofactor.

The protein resides in the mitochondrion outer membrane. It carries out the reaction 2 Fe(III)-[cytochrome b5] + NADH = 2 Fe(II)-[cytochrome b5] + NAD(+) + H(+). Its function is as follows. May mediate the reduction of outer membrane cytochrome b5. The protein is NADH-cytochrome b5 reductase 2 (MCR1) of Mycosarcoma maydis (Corn smut fungus).